A 276-amino-acid polypeptide reads, in one-letter code: Glucosamine-6-phosphate deaminase 2 (276 aa).

Aspartate 72 (proton acceptor; for enolization step) is an active-site residue. Positions 103 to 131 (NAHILDGNAADLQAECDAFEEKIKEAGGI) form a coiled coil. The active-site For ring-opening step is aspartate 141. Histidine 143 acts as the Proton acceptor; for ring-opening step in catalysis. Residue glutamate 148 is the For ring-opening step of the active site. Threonine 161 is modified (phosphothreonine).

The protein belongs to the glucosamine/galactosamine-6-phosphate isomerase family. As to quaternary structure, homohexamer.

It localises to the cytoplasm. It catalyses the reaction alpha-D-glucosamine 6-phosphate + H2O = beta-D-fructose 6-phosphate + NH4(+). Its pathway is nucleotide-sugar biosynthesis; UDP-N-acetyl-alpha-D-glucosamine biosynthesis; alpha-D-glucosamine 6-phosphate from D-fructose 6-phosphate: step 1/1. Allosterically activated by N-acetylglucosamine-6-phosphate (GlcNAc6P). Functionally, catalyzes the reversible conversion of alpha-D-glucosamine 6-phosphate (GlcN-6P) into beta-D-fructose 6-phosphate (Fru-6P) and ammonium ion, a regulatory reaction step in de novo uridine diphosphate-N-acetyl-alpha-D-glucosamine (UDP-GlcNAc) biosynthesis via hexosamine pathway. Deamination is coupled to aldo-keto isomerization mediating the metabolic flux from UDP-GlcNAc toward Fru-6P. At high ammonium level can drive amination and isomerization of Fru-6P toward hexosamines and UDP-GlcNAc synthesis. Has a role in fine tuning the metabolic fluctuations of cytosolic UDP-GlcNAc and their effects on hyaluronan synthesis that occur during tissue remodeling. The chain is Glucosamine-6-phosphate deaminase 2 from Mus musculus (Mouse).